Here is a 289-residue protein sequence, read N- to C-terminus: MFVRNTASVVRGTSRNYATLREIETRLKSIKNIEKITKTMKIVASTRLSKAERAKNSAKEYALADAAFYKNAETVPLEDAEKKDLIIAITSDKGLCGSIHSQLAKAVRLQLKQTPNADVVAIGDKVKGQLLRTNSDNLKFAFNGVGKEAPTFEETSLIANKILEGGASNYKKVSIFWNDPISSLSFEPSNKPVFNAAAIEQSPSFSKFEIDADNNVSQDLFEFTLSNEILAAMAEGYAAEVSARRNAMDNASKNAGDMINSYSILYNRTRQAVITNELVDIITGASSLD.

The protein belongs to the ATPase gamma chain family. F-type ATPases have 2 components, CF(1) - the catalytic core - and CF(0) - the membrane proton channel. CF(1) has five subunits: alpha(3), beta(3), gamma(1), delta(1), epsilon(1). CF(0) has three main subunits: a, b and c.

The protein localises to the mitochondrion. Its subcellular location is the mitochondrion inner membrane. In terms of biological role, mitochondrial membrane ATP synthase (F(1)F(0) ATP synthase or Complex V) produces ATP from ADP in the presence of a proton gradient across the membrane which is generated by electron transport complexes of the respiratory chain. F-type ATPases consist of two structural domains, F(1) - containing the extramembraneous catalytic core, and F(0) - containing the membrane proton channel, linked together by a central stalk and a peripheral stalk. During catalysis, ATP synthesis in the catalytic domain of F(1) is coupled via a rotary mechanism of the central stalk subunits to proton translocation. Part of the complex F(1) domain and the central stalk which is part of the complex rotary element. The gamma subunit protrudes into the catalytic domain formed of alpha(3)beta(3). Rotation of the central stalk against the surrounding alpha(3)beta(3) subunits leads to hydrolysis of ATP in three separate catalytic sites on the beta subunits. The sequence is that of ATP synthase subunit gamma, mitochondrial (ATP3) from Kluyveromyces lactis (strain ATCC 8585 / CBS 2359 / DSM 70799 / NBRC 1267 / NRRL Y-1140 / WM37) (Yeast).